Reading from the N-terminus, the 352-residue chain is Holliday junction branch migration complex subunit RuvB (352 aa).

Positions 4-185 (PDRLISAVSG…FGIVQRLEFY (182 aa)) are large ATPase domain (RuvB-L). Residues Ile-24, Arg-25, Gly-66, Lys-69, Thr-70, Thr-71, 132 to 134 (EDF), Arg-175, Tyr-185, and Arg-222 each bind ATP. Thr-70 contacts Mg(2+). The interval 186–256 (NVEDLATIVS…IADKALNLLD (71 aa)) is small ATPAse domain (RuvB-S). The head domain (RuvB-H) stretch occupies residues 259 to 352 (ERGFDHLDRR…TDLFTSEDGN (94 aa)). Residues Arg-295, Arg-314, and Arg-319 each contribute to the DNA site.

It belongs to the RuvB family. As to quaternary structure, homohexamer. Forms an RuvA(8)-RuvB(12)-Holliday junction (HJ) complex. HJ DNA is sandwiched between 2 RuvA tetramers; dsDNA enters through RuvA and exits via RuvB. An RuvB hexamer assembles on each DNA strand where it exits the tetramer. Each RuvB hexamer is contacted by two RuvA subunits (via domain III) on 2 adjacent RuvB subunits; this complex drives branch migration. In the full resolvosome a probable DNA-RuvA(4)-RuvB(12)-RuvC(2) complex forms which resolves the HJ.

The protein resides in the cytoplasm. The catalysed reaction is ATP + H2O = ADP + phosphate + H(+). Functionally, the RuvA-RuvB-RuvC complex processes Holliday junction (HJ) DNA during genetic recombination and DNA repair, while the RuvA-RuvB complex plays an important role in the rescue of blocked DNA replication forks via replication fork reversal (RFR). RuvA specifically binds to HJ cruciform DNA, conferring on it an open structure. The RuvB hexamer acts as an ATP-dependent pump, pulling dsDNA into and through the RuvAB complex. RuvB forms 2 homohexamers on either side of HJ DNA bound by 1 or 2 RuvA tetramers; 4 subunits per hexamer contact DNA at a time. Coordinated motions by a converter formed by DNA-disengaged RuvB subunits stimulates ATP hydrolysis and nucleotide exchange. Immobilization of the converter enables RuvB to convert the ATP-contained energy into a lever motion, pulling 2 nucleotides of DNA out of the RuvA tetramer per ATP hydrolyzed, thus driving DNA branch migration. The RuvB motors rotate together with the DNA substrate, which together with the progressing nucleotide cycle form the mechanistic basis for DNA recombination by continuous HJ branch migration. Branch migration allows RuvC to scan DNA until it finds its consensus sequence, where it cleaves and resolves cruciform DNA. The polypeptide is Holliday junction branch migration complex subunit RuvB (Pseudomonas aeruginosa (strain LESB58)).